A 456-amino-acid chain; its full sequence is Methionine aminopeptidase 2 (456 aa).

Pro residues predominate over residues 1–11 (MTIPVPKPAHP). The interval 1–127 (MTIPVPKPAH…SYRTTSSEKR (127 aa)) is disordered. Residues 31–45 (EADEEEDDDDEEGKE) show a composition bias toward acidic residues. Residues 66–79 (KKKKKKKKKPKKKK) are compositionally biased toward basic residues. A substrate-binding site is contributed by His209. Positions 229, 240, and 309 each coordinate a divalent metal cation. A substrate-binding site is contributed by His317. 2 residues coordinate a divalent metal cation: Glu343 and Glu437.

The protein belongs to the peptidase M24A family. Methionine aminopeptidase eukaryotic type 2 subfamily. Co(2+) serves as cofactor. Requires Zn(2+) as cofactor. The cofactor is Mn(2+). Fe(2+) is required as a cofactor.

The protein localises to the cytoplasm. The catalysed reaction is Release of N-terminal amino acids, preferentially methionine, from peptides and arylamides.. Functionally, cotranslationally removes the N-terminal methionine from nascent proteins. The N-terminal methionine is often cleaved when the second residue in the primary sequence is small and uncharged (Met-Ala-, Cys, Gly, Pro, Ser, Thr, or Val). This is Methionine aminopeptidase 2 from Puccinia graminis f. sp. tritici (strain CRL 75-36-700-3 / race SCCL) (Black stem rust fungus).